A 125-amino-acid polypeptide reads, in one-letter code: Holo-[acyl-carrier-protein] synthase (125 aa).

Mg(2+) contacts are provided by Asp-8 and Glu-57.

The protein belongs to the P-Pant transferase superfamily. AcpS family. Requires Mg(2+) as cofactor.

The protein localises to the cytoplasm. It carries out the reaction apo-[ACP] + CoA = holo-[ACP] + adenosine 3',5'-bisphosphate + H(+). Functionally, transfers the 4'-phosphopantetheine moiety from coenzyme A to a Ser of acyl-carrier-protein. The protein is Holo-[acyl-carrier-protein] synthase of Neisseria gonorrhoeae (strain ATCC 700825 / FA 1090).